The sequence spans 512 residues: Glutathione-binding protein GsiB (512 aa).

The signal sequence occupies residues 1–26; sequence MARAVHRSGLVALGIATALMASCAFA.

The protein belongs to the bacterial solute-binding protein 5 family. In terms of assembly, the complex is composed of two ATP-binding proteins (GsiA), two transmembrane proteins (GsiC and GsiD) and a solute-binding protein (GsiB).

The protein localises to the periplasm. Part of the ABC transporter complex GsiABCD involved in glutathione import. Binds glutathione. This Shigella flexneri protein is Glutathione-binding protein GsiB.